Here is a 385-residue protein sequence, read N- to C-terminus: Mannitol-1-phosphate 5-dehydrogenase (385 aa).

3–14 (ALQFGAGNIGRG) is an NAD(+) binding site.

This sequence belongs to the mannitol dehydrogenase family.

The enzyme catalyses D-mannitol 1-phosphate + NAD(+) = beta-D-fructose 6-phosphate + NADH + H(+). The protein is Mannitol-1-phosphate 5-dehydrogenase of Buchnera aphidicola subsp. Acyrthosiphon pisum (strain Tuc7).